Consider the following 380-residue polypeptide: WAT1-related protein At2g37460 (380 aa).

The next 10 helical transmembrane spans lie at 16 to 36, 45 to 65, 71 to 91, 107 to 127, 142 to 162, 187 to 207, 216 to 236, 254 to 274, 282 to 302, and 306 to 326; these read FISM…SKAV, VLVV…AFYF, PKMT…EPVI, FATA…YIFG, VVGT…KGPV, GAVL…LQAI, LSLT…VALV, LTAT…GGVV, FVTA…TIIF, and MYLG…LVIW. The 108-residue stretch at 27–134 folds into the EamA 1 domain; it reads AGMDILSKAV…IFGLERVKLR (108 aa). Positions 196–325 constitute an EamA 2 domain; it reads FSYACFMILQ…VICAGLYLVI (130 aa).

This sequence belongs to the drug/metabolite transporter (DMT) superfamily. Plant drug/metabolite exporter (P-DME) (TC 2.A.7.4) family.

The protein localises to the membrane. The chain is WAT1-related protein At2g37460 from Arabidopsis thaliana (Mouse-ear cress).